A 429-amino-acid polypeptide reads, in one-letter code: Saccharopine dehydrogenase-like oxidoreductase (429 aa).

Ala-2 carries the N-acetylalanine modification. Ser-217 carries the post-translational modification Phosphoserine.

Belongs to the saccharopine dehydrogenase family.

This chain is Saccharopine dehydrogenase-like oxidoreductase (SCCPDH), found in Homo sapiens (Human).